A 159-amino-acid chain; its full sequence is Protein-export protein SecB (159 aa).

This sequence belongs to the SecB family. In terms of assembly, homotetramer, a dimer of dimers. One homotetramer interacts with 1 SecA dimer.

Its subcellular location is the cytoplasm. Functionally, one of the proteins required for the normal export of preproteins out of the cell cytoplasm. It is a molecular chaperone that binds to a subset of precursor proteins, maintaining them in a translocation-competent state. It also specifically binds to its receptor SecA. The sequence is that of Protein-export protein SecB from Marinomonas sp. (strain MWYL1).